The sequence spans 346 residues: Heat-inducible transcription repressor HrcA (346 aa).

Belongs to the HrcA family.

Functionally, negative regulator of class I heat shock genes (grpE-dnaK-dnaJ and groELS operons). Prevents heat-shock induction of these operons. The polypeptide is Heat-inducible transcription repressor HrcA (Erythrobacter litoralis (strain HTCC2594)).